The sequence spans 187 residues: Orotate phosphoribosyltransferase (187 aa).

Position 110–118 (110–118 (EDVVTTGGS)) interacts with 5-phospho-alpha-D-ribose 1-diphosphate. Residues Thr114 and Arg142 each contribute to the orotate site.

It belongs to the purine/pyrimidine phosphoribosyltransferase family. PyrE subfamily. Homodimer. Requires Mg(2+) as cofactor.

The catalysed reaction is orotidine 5'-phosphate + diphosphate = orotate + 5-phospho-alpha-D-ribose 1-diphosphate. The protein operates within pyrimidine metabolism; UMP biosynthesis via de novo pathway; UMP from orotate: step 1/2. Functionally, catalyzes the transfer of a ribosyl phosphate group from 5-phosphoribose 1-diphosphate to orotate, leading to the formation of orotidine monophosphate (OMP). This is Orotate phosphoribosyltransferase from Thermotoga maritima (strain ATCC 43589 / DSM 3109 / JCM 10099 / NBRC 100826 / MSB8).